We begin with the raw amino-acid sequence, 252 residues long: Triosephosphate isomerase (252 aa).

10 to 12 (NWK) serves as a coordination point for substrate. The active-site Electrophile is His-96. Glu-168 serves as the catalytic Proton acceptor. Substrate-binding positions include Gly-174, Ser-214, and 235 to 236 (GG).

Belongs to the triosephosphate isomerase family. Homodimer.

It localises to the cytoplasm. The enzyme catalyses D-glyceraldehyde 3-phosphate = dihydroxyacetone phosphate. The protein operates within carbohydrate biosynthesis; gluconeogenesis. It participates in carbohydrate degradation; glycolysis; D-glyceraldehyde 3-phosphate from glycerone phosphate: step 1/1. Functionally, involved in the gluconeogenesis. Catalyzes stereospecifically the conversion of dihydroxyacetone phosphate (DHAP) to D-glyceraldehyde-3-phosphate (G3P). This Streptococcus pneumoniae serotype 2 (strain D39 / NCTC 7466) protein is Triosephosphate isomerase.